Here is a 249-residue protein sequence, read N- to C-terminus: Triosephosphate isomerase (249 aa).

9-11 (NWK) is a substrate binding site. The Electrophile role is filled by His-91. The Proton acceptor role is filled by Glu-163. Substrate-binding positions include Gly-169, Ser-209, and 230 to 231 (GG).

The protein belongs to the triosephosphate isomerase family. Homodimer.

The protein localises to the cytoplasm. The catalysed reaction is D-glyceraldehyde 3-phosphate = dihydroxyacetone phosphate. It participates in carbohydrate biosynthesis; gluconeogenesis. It functions in the pathway carbohydrate degradation; glycolysis; D-glyceraldehyde 3-phosphate from glycerone phosphate: step 1/1. Its function is as follows. Involved in the gluconeogenesis. Catalyzes stereospecifically the conversion of dihydroxyacetone phosphate (DHAP) to D-glyceraldehyde-3-phosphate (G3P). This is Triosephosphate isomerase from Halorhodospira halophila (strain DSM 244 / SL1) (Ectothiorhodospira halophila (strain DSM 244 / SL1)).